The primary structure comprises 875 residues: Neurotrypsin (875 aa).

A signal peptide spans 1-20; sequence MTLARFVLALMLGALPEVVG. N-linked (GlcNAc...) asparagine glycosylation occurs at asparagine 26. A disordered region spans residues 29 to 88; that stretch reads LHHSHRHSPPPGPHYPYYLPTQQRPPRTRPPPPLPRFPRPPRALPAQRPHALQAGHTPRP. The span at 43-53 shows a compositional bias: low complexity; that stretch reads YPYYLPTQQRP. Over residues 56–71 the composition is skewed to pro residues; it reads TRPPPPLPRFPRPPRA. The region spanning 93-165 is the Kringle domain; it reads CPAGEPWVSV…GKVDWGYCDC (73 aa). Cystine bridges form between cysteine 93/cysteine 165, cysteine 109/cysteine 149, cysteine 138/cysteine 163, cysteine 195/cysteine 259, cysteine 208/cysteine 269, cysteine 239/cysteine 249, cysteine 305/cysteine 369, cysteine 318/cysteine 379, cysteine 349/cysteine 359, cysteine 412/cysteine 475, cysteine 425/cysteine 485, cysteine 455/cysteine 465, cysteine 525/cysteine 589, cysteine 538/cysteine 599, cysteine 569/cysteine 579, cysteine 619/cysteine 750, cysteine 661/cysteine 677, cysteine 765/cysteine 831, cysteine 794/cysteine 808, and cysteine 821/cysteine 850. SRCR domains are found at residues 170–271, 280–381, 387–487, and 500–601; these read VRLR…TCSF, IRLA…SCTP, IRLA…ACYP, and VRLV…ICDY. Residues 619–630 form a zymogen activation region region; that stretch reads CGLRLLHRRQKR. Positions 631–874 constitute a Peptidase S1 domain; sequence IIGGKNSLRG…FVPWIKSVTK (244 aa). The active-site Charge relay system is histidine 676. N-linked (GlcNAc...) asparagine glycosylation occurs at asparagine 683. Catalysis depends on aspartate 726, which acts as the Charge relay system. Serine 825 serves as the catalytic Charge relay system.

This sequence belongs to the peptidase S1 family.

The protein localises to the secreted. Functionally, plays a role in neuronal plasticity and the proteolytic action may subserve structural reorganizations associated with learning and memory operations. This is Neurotrypsin (PRSS12) from Pan troglodytes (Chimpanzee).